The following is a 456-amino-acid chain: Probable mannan endo-1,4-beta-mannosidase F (456 aa).

Residues 1 to 18 form the signal peptide; that stretch reads MRPLSSAALLSAIGAVAA. A CBM1 domain is found at 19–54; the sequence is QVGPWGQCGGQSYTGGTSCVSGWACVFLNDWYSQCQ. Residues 79–110 form a disordered region; that stretch reads STSVSATAPPSSTSSSTASVSSSTSSTPIPTS. Residues 79–113 are ser-rich linker; the sequence is STSVSATAPPSSTSSSTASVSSSTSSTPIPTSSGS. The interval 114–456 is catalytic; sequence FVKAEGLKFN…CAVIDHVSRI (343 aa). Residues Trp-166 and Asn-280 each contribute to the substrate site. Glu-281 acts as the Proton donor in catalysis. Residue Tyr-356 coordinates substrate. The active-site Nucleophile is the Glu-390. Trp-420 contributes to the substrate binding site.

This sequence belongs to the glycosyl hydrolase 5 (cellulase A) family.

It localises to the secreted. The enzyme catalyses Random hydrolysis of (1-&gt;4)-beta-D-mannosidic linkages in mannans, galactomannans and glucomannans.. Endo-1,4-mannanase, a crucial enzyme for depolymerization of seed galactomannans and wood galactoglucomannans. This Neosartorya fischeri (strain ATCC 1020 / DSM 3700 / CBS 544.65 / FGSC A1164 / JCM 1740 / NRRL 181 / WB 181) (Aspergillus fischerianus) protein is Probable mannan endo-1,4-beta-mannosidase F (manF).